We begin with the raw amino-acid sequence, 263 residues long: uncharacterized protein (263 aa).

Residues 198–224 (KRSSDSFVSLKPGEDEHSPLEISTCGN) are disordered.

This is an uncharacterized protein from Saccharomyces cerevisiae (strain ATCC 204508 / S288c) (Baker's yeast).